Here is a 39-residue protein sequence, read N- to C-terminus: MQVNENPNKVPVELNRTSLYLGLLSVFVLGILFSSYFFN.

A helical transmembrane segment spans residues 18–38; that stretch reads SLYLGLLSVFVLGILFSSYFF.

This sequence belongs to the PsbL family. As to quaternary structure, PSII is composed of 1 copy each of membrane proteins PsbA, PsbB, PsbC, PsbD, PsbE, PsbF, PsbH, PsbI, PsbJ, PsbK, PsbL, PsbM, PsbT, PsbX, PsbY, Psb30/Ycf12, peripheral proteins PsbO, CyanoQ (PsbQ), PsbU, PsbV and a large number of cofactors. It forms dimeric complexes.

Its subcellular location is the cellular thylakoid membrane. In terms of biological role, one of the components of the core complex of photosystem II (PSII). PSII is a light-driven water:plastoquinone oxidoreductase that uses light energy to abstract electrons from H(2)O, generating O(2) and a proton gradient subsequently used for ATP formation. It consists of a core antenna complex that captures photons, and an electron transfer chain that converts photonic excitation into a charge separation. This subunit is found at the monomer-monomer interface and is required for correct PSII assembly and/or dimerization. The polypeptide is Photosystem II reaction center protein L (Prochlorococcus marinus (strain MIT 9301)).